The sequence spans 667 residues: MAPTPKYTFTERAAAGNLSDAEILNSNNPTGSELPDESDVVVGGAGIHGLIYALHASKYKPNNLKISVIEKNTRPGYKIGESTLPIFYTWCKLHGISAAYLLRLFGLKDGLCFYFLDRENQGQYTDFCSVGAPGLVLASLQIERPMSELLFTILAQRNGVNVYHGREVDFKSTVVQGGGQGNKIAVSRGKYDSTPKTIDSALFVDATGRFRQFCSKKAPRHRFDGWNCNAFWGYFTAPKDESKIPFDLYEGDHTNHLCFPEGWVWVIRLPSWEGSLIANLMDMVTYILECADAGVPGDELPSSEELARMFGLKFQWVTSIGFAVRNDVKYPEDLSAYGTREAEQKFNYFVQKYELLQQFMSNFELIENLYGPGTTWFIRKTLAYQSPVVSGPGWLAIGDACGFTNPLYSPGINVGMSTSTWAAQLSHRIVEIGKSAPADAAESSIRKLLVPYDDYCKSLVPALEQMNRFNYVCYRDTRLGPQVACLWQFFAGIERYLSDVNIETFAHYAIKWVWGAMVPEYQQVAQKCIEHIETVPLDERLPDAMVDELLAFSNRIKSAAVAADDFSLRWDAILRSFDRSLNFVEGKTSRDIYTRQCSGCGAWLQLRPDWKKCHSCGLLGTEPQTAVTFDPPLTAEEEALLYAAWNTAPKYDPSKELKLPTPTRPAA.

His48, Glu70, Ile79, and Ser82 together coordinate FAD. Lys108 is a catalytic residue. FAD-binding residues include Arg144, Val168, Asp399, and Ile412. Residue Glu494 participates in substrate binding. Zn(2+)-binding residues include Cys597, Cys600, Cys613, and Cys616. Residues 621 to 646 (TEPQTAVTFDPPLTAEEEALLYAAWN) are flexible region.

Belongs to the flavin-dependent halogenase family. Zn(2+) is required as a cofactor.

The catalysed reaction is (+)-premalbrancheamide + 2 FAD + 2 chloride + 4 H(+) = (+)-malbrancheamide + 2 FADH2. The enzyme catalyses (+)-premalbrancheamide + FAD + chloride + 2 H(+) = (+)-malbrancheamide B + FADH2. It catalyses the reaction (+)-premalbrancheamide + FAD + chloride + 2 H(+) = (+)-isomalbrancheamide B + FADH2. It carries out the reaction (+)-malbrancheamide B + FAD + chloride + 2 H(+) = (+)-malbrancheamide + FADH2. The catalysed reaction is (+)-isomalbrancheamide B + FAD + chloride + 2 H(+) = (+)-malbrancheamide + FADH2. The enzyme catalyses (+)-premalbrancheamide + bromide + FAD + 2 H(+) = (+)-malbrancheamide C + FADH2. It catalyses the reaction (+)-premalbrancheamide + bromide + FAD + 2 H(+) = (+)-isomalbrancheamide C + FADH2. It carries out the reaction (+)-malbrancheamide B + bromide + FAD + 2 H(+) = (+)-malbrancheamide D + FADH2. The catalysed reaction is (+)-isomalbrancheamide B + bromide + FAD + 2 H(+) = (+)-isomalbrancheamide D + FADH2. It functions in the pathway alkaloid biosynthesis. In terms of biological role, flavin-dependent halogenase; part of the gene cluster that mediates the biosynthesis of malbrancheamide, a dichlorinated fungal indole alkaloid that belongs to a family of natural products containing a characteristic bicyclo[2.2.2]diazaoctane core. The first step of malbrancheamide biosynthesis involves coupling of L-proline and L-tryptophan by malG, a bimodular NRPS, to produce L-Pro-L-Trp aldehyde through reductive offloading. This compound undergoes spontaneous cyclization and dehydration to give a dienamine which is reverse prenylated at C-2 by malE. The other prenyltransferase present in the cluster, malB, displays modest activity, suggesting that may be a redundant gene in the pathway. Subsequently, a [4+2] Diels-Alder cyclo-addition catalyzed by the bifunctional enzyme malC forms the characteristic bicyclo[2.2.2]diazaoctane ring of premalbrancheamid. Finally, the flavin-dependent halogenase malA catalyzes the iterative dichlorination of the indole ring of premalbrancheamide to yield C-9 monochlorinated malbrancheamide B, C-8 monochlorinated isomalbrancheamide B, and dichlorinated malbrancheamide. MalA is also able to brominate premalbrancheamide at C-9 to yield malbrancheamide C, and, to a lesser extend, at C-8 to yield isomalbrancheamide C. Finally, malA can brominate C-9 monochlorinated malbrancheamide B at C-8 to yield malbrancheamide D, or C-8 monochlorinated isomalbrancheamide B at C-9 to produce isomalbrancheamide D. This is Flavin-dependent halogenase malA from Malbranchea aurantiaca.